The sequence spans 307 residues: Nuclear polyadenylated RNA-binding protein nab2 (307 aa).

The interval 102 to 135 (STDKSQQSFSVPETSIQPQSSQTPNITSLREEKE) is disordered. Positions 105–129 (KSQQSFSVPETSIQPQSSQTPNITS) are enriched in polar residues. C3H1-type zinc fingers lie at residues 178-202 (TQEV…HPTP), 217-232 (CASG…VKGH), and 254-268 (CKYK…RFIH). The tract at residues 274–307 (NMTWRPPSKTEETSLSERSFAVNESEEQLHVPSV) is disordered.

Belongs to the ZC3H14 family.

It is found in the nucleus. RNA-binding protein involved in RNA processing. Acts as a regulator of mRNA stability: binds to mRNAs and pre-mRNAs, preventing their degradation. Involved in the biogenesis of circular RNAs (circRNAs) which are produced by back-splicing circularization of pre-mRNAs. The chain is Nuclear polyadenylated RNA-binding protein nab2 from Schizosaccharomyces pombe (strain 972 / ATCC 24843) (Fission yeast).